Reading from the N-terminus, the 894-residue chain is Probable cytoplasmic aconitate hydratase (894 aa).

Substrate-binding positions include Gln-87 and 207–209 (DSH). 3 residues coordinate [4Fe-4S] cluster: Cys-438, Cys-504, and Cys-507. Substrate contacts are provided by residues Arg-537, Arg-542, and 781 to 782 (SR).

Belongs to the aconitase/IPM isomerase family. [4Fe-4S] cluster serves as cofactor.

Its subcellular location is the cytoplasm. It localises to the cytosol. The catalysed reaction is citrate = D-threo-isocitrate. Catalyzes the isomerization of citrate to isocitrate via cis-aconitate. This chain is Probable cytoplasmic aconitate hydratase (aco1), found in Dictyostelium discoideum (Social amoeba).